Here is a 251-residue protein sequence, read N- to C-terminus: 3-deoxy-manno-octulosonate cytidylyltransferase (251 aa).

It belongs to the KdsB family.

The protein resides in the cytoplasm. The enzyme catalyses 3-deoxy-alpha-D-manno-oct-2-ulosonate + CTP = CMP-3-deoxy-beta-D-manno-octulosonate + diphosphate. It participates in nucleotide-sugar biosynthesis; CMP-3-deoxy-D-manno-octulosonate biosynthesis; CMP-3-deoxy-D-manno-octulosonate from 3-deoxy-D-manno-octulosonate and CTP: step 1/1. It functions in the pathway bacterial outer membrane biogenesis; lipopolysaccharide biosynthesis. In terms of biological role, activates KDO (a required 8-carbon sugar) for incorporation into bacterial lipopolysaccharide in Gram-negative bacteria. The sequence is that of 3-deoxy-manno-octulosonate cytidylyltransferase from Brucella abortus (strain 2308).